The following is a 450-amino-acid chain: Chromosomal replication initiator protein DnaA (450 aa).

Residues 1–76 are domain I, interacts with DnaA modulators; it reads MNLNDILKEL…KKILKQPVNI (76 aa). The domain II stretch occupies residues 76 to 107; that stretch reads ISFTYEQEYQKQLEKTESINKDHSDIISKKNK. Residues 108–327 form a domain III, AAA+ region region; sequence KVNENTFENF…GSVSRLNFWS (220 aa). Positions 151, 153, 154, and 155 each coordinate ATP. The domain IV, binds dsDNA stretch occupies residues 328 to 450; sequence QQNPEEKVIT…DILKNKILTK (123 aa).

Belongs to the DnaA family. As to quaternary structure, oligomerizes as a right-handed, spiral filament on DNA at oriC.

It is found in the cytoplasm. The protein resides in the cell membrane. Its function is as follows. Plays an essential role in the initiation and regulation of chromosomal replication. ATP-DnaA binds to the origin of replication (oriC) to initiate formation of the DNA replication initiation complex once per cell cycle. Binds the DnaA box (a 9 base pair repeat at the origin) and separates the double-stranded (ds)DNA. Forms a right-handed helical filament on oriC DNA; dsDNA binds to the exterior of the filament while single-stranded (ss)DNA is stabiized in the filament's interior. The ATP-DnaA-oriC complex binds and stabilizes one strand of the AT-rich DNA unwinding element (DUE), permitting loading of DNA polymerase. After initiation quickly degrades to an ADP-DnaA complex that is not apt for DNA replication. Binds acidic phospholipids. The polypeptide is Chromosomal replication initiator protein DnaA (Mycoplasma capricolum subsp. capricolum (strain California kid / ATCC 27343 / NCTC 10154)).